A 572-amino-acid chain; its full sequence is Urease subunit alpha (572 aa).

One can recognise a Urease domain in the interval 134–572; sequence AGIDSHIHLI…ASMNQRYFFG (439 aa). The Ni(2+) site is built by histidine 139, histidine 141, and lysine 222. The residue at position 222 (lysine 222) is an N6-carboxylysine. Histidine 224 lines the substrate pocket. Ni(2+)-binding residues include histidine 251 and histidine 277. Catalysis depends on histidine 325, which acts as the Proton donor. Aspartate 365 serves as a coordination point for Ni(2+).

The protein belongs to the metallo-dependent hydrolases superfamily. Urease alpha subunit family. As to quaternary structure, heterotrimer of UreA (gamma), UreB (beta) and UreC (alpha) subunits. Three heterotrimers associate to form the active enzyme. The cofactor is Ni cation. In terms of processing, carboxylation allows a single lysine to coordinate two nickel ions.

The protein localises to the cytoplasm. The catalysed reaction is urea + 2 H2O + H(+) = hydrogencarbonate + 2 NH4(+). It participates in nitrogen metabolism; urea degradation; CO(2) and NH(3) from urea (urease route): step 1/1. The sequence is that of Urease subunit alpha from Yersinia pseudotuberculosis serotype O:1b (strain IP 31758).